The following is a 220-amino-acid chain: Adenylate kinase (220 aa).

Gly12–Thr17 is a binding site for ATP. Positions Ser32 to Val62 are NMP. AMP is bound by residues Thr33, Arg38, Glu60–Val62, Gly88–Arg91, and Gln95. An LID region spans residues Ala129 to Asp166. Arg130 contributes to the ATP binding site. Zn(2+)-binding residues include Cys133 and Cys136. ATP is bound at residue Ile139–Tyr140. Residues Cys153 and Cys156 each coordinate Zn(2+). AMP-binding residues include Arg163 and Arg174. An ATP-binding site is contributed by Ile202.

It belongs to the adenylate kinase family. In terms of assembly, monomer.

The protein resides in the cytoplasm. The catalysed reaction is AMP + ATP = 2 ADP. The protein operates within purine metabolism; AMP biosynthesis via salvage pathway; AMP from ADP: step 1/1. Functionally, catalyzes the reversible transfer of the terminal phosphate group between ATP and AMP. Plays an important role in cellular energy homeostasis and in adenine nucleotide metabolism. The protein is Adenylate kinase of Thermotoga maritima (strain ATCC 43589 / DSM 3109 / JCM 10099 / NBRC 100826 / MSB8).